The primary structure comprises 87 residues: Large ribosomal subunit protein bL31B (87 aa).

It belongs to the bacterial ribosomal protein bL31 family. Type B subfamily. As to quaternary structure, part of the 50S ribosomal subunit.

This Pseudomonas aeruginosa (strain LESB58) protein is Large ribosomal subunit protein bL31B.